Consider the following 577-residue polypeptide: Arginine--tRNA ligase (577 aa).

The short motif at 122 to 132 (PNVAKEMHVGH) is the 'HIGH' region element.

The protein belongs to the class-I aminoacyl-tRNA synthetase family. Monomer.

The protein localises to the cytoplasm. The enzyme catalyses tRNA(Arg) + L-arginine + ATP = L-arginyl-tRNA(Arg) + AMP + diphosphate. The sequence is that of Arginine--tRNA ligase from Haemophilus influenzae (strain PittGG).